We begin with the raw amino-acid sequence, 384 residues long: Glycine-rich cell wall structural protein 1 (384 aa).

Residues 1 to 27 (MGSSQKWVIGLLLFSSIFFELTAITLA) form the signal peptide.

The protein localises to the secreted. The protein resides in the cell wall. In terms of biological role, responsible for plasticity of the cell wall. The sequence is that of Glycine-rich cell wall structural protein 1 (GRP-1) from Petunia hybrida (Petunia).